A 79-amino-acid polypeptide reads, in one-letter code: uncharacterized protein (79 aa).

The region spanning 3–54 is the TM2 domain; sequence SKKNKIVAALLAFFFGGLGIHKFYLGRVGQGILYILFCWTGIPSIIAFIEFI. The next 2 helical transmembrane spans lie at 8 to 28 and 37 to 57; these read IVAALLAFFFGGLGIHKFYLG and ILFCWTGIPSIIAFIEFIIFL.

Its subcellular location is the cell membrane. This is an uncharacterized protein from Bacillus subtilis (strain 168).